A 131-amino-acid polypeptide reads, in one-letter code: MSAATDEILEKLKSLSLLEAAELVKQIEETFGVSAAAPVGGMMMAAPGAVPGAAAEPEEEKTEFDVILEEVPADKKIAILKVVRTITGLGLKEAKDLVESTPKPIKEGTNKDDAEETKKKLEEAGAKVTVK.

Residues E99 to G125 are compositionally biased toward basic and acidic residues. Positions E99 to K131 are disordered.

It belongs to the bacterial ribosomal protein bL12 family. Homodimer. Part of the ribosomal stalk of the 50S ribosomal subunit. Forms a multimeric L10(L12)X complex, where L10 forms an elongated spine to which 2 to 4 L12 dimers bind in a sequential fashion. Binds GTP-bound translation factors.

Functionally, forms part of the ribosomal stalk which helps the ribosome interact with GTP-bound translation factors. Is thus essential for accurate translation. The chain is Large ribosomal subunit protein bL12 from Gloeothece citriformis (strain PCC 7424) (Cyanothece sp. (strain PCC 7424)).